Consider the following 144-residue polypeptide: Large ribosomal subunit protein uL13 (144 aa).

It belongs to the universal ribosomal protein uL13 family. Part of the 50S ribosomal subunit.

In terms of biological role, this protein is one of the early assembly proteins of the 50S ribosomal subunit, although it is not seen to bind rRNA by itself. It is important during the early stages of 50S assembly. The protein is Large ribosomal subunit protein uL13 of Chloroflexus aurantiacus (strain ATCC 29366 / DSM 635 / J-10-fl).